Consider the following 631-residue polypeptide: Chaperone protein HtpG (631 aa).

Positions 1–342 are a; substrate-binding; it reads MSEQTANKET…SNDLPLNVSR (342 aa). The b stretch occupies residues 343-559; the sequence is EILQDNKVTQ…DFEMGTQMAK (217 aa). Residues 560–631 form a c region; that stretch reads LLEAAGQAAP…LSAMNQLLAK (72 aa).

It belongs to the heat shock protein 90 family. As to quaternary structure, homodimer.

It localises to the cytoplasm. Its function is as follows. Molecular chaperone. Has ATPase activity. The polypeptide is Chaperone protein HtpG (Aliivibrio fischeri (strain ATCC 700601 / ES114) (Vibrio fischeri)).